The primary structure comprises 369 residues: 3 beta-hydroxysteroid dehydrogenase type 7 (369 aa).

Catalysis depends on Tyr-159, which acts as the Proton acceptor. Lys-163 contributes to the NAD(+) binding site. The next 2 membrane-spanning stretches (helical) occupy residues 289–309 and 311–331; these read LLPYWLLVFLAALNALLQWLL and PLVLYAPLLNPYTLAVANTTF.

Belongs to the 3-beta-HSD family.

It is found in the endoplasmic reticulum membrane. It catalyses the reaction 7alpha-hydroxycholesterol + NAD(+) = 7alpha-hydroxycholest-4-en-3-one + NADH + H(+). The catalysed reaction is 7alpha,25-dihydroxycholesterol + NAD(+) = 7alpha,25-dihydroxy-4-cholesten-3-one + NADH + H(+). The enzyme catalyses (25R)-cholest-5-en-3beta,7alpha,26-triol + NAD(+) = (25R)-7alpha,26-dihydroxycholest-4-en-3-one + NADH + H(+). It carries out the reaction (24S)-7alpha-dihydroxycholesterol + NAD(+) = (24S)-7alpha,24-dihydroxycholest-4-en-3-one + NADH + H(+). Its pathway is lipid metabolism; steroid biosynthesis. In terms of biological role, the 3-beta-HSD enzymatic system plays a crucial role in the biosynthesis of all classes of hormonal steroids. HSD VII is active against four 7-alpha-hydroxylated sterols. Does not metabolize several different C(19/21) steroids as substrates. Involved in bile acid synthesis. Plays a key role in cell positioning and movement in lymphoid tissues by mediating degradation of 7-alpha,25-dihydroxycholesterol (7-alpha,25-OHC): 7-alpha,25-OHC acts as a ligand for the G protein-coupled receptor GPR183/EBI2, a chemotactic receptor for a number of lymphoid cells. This Homo sapiens (Human) protein is 3 beta-hydroxysteroid dehydrogenase type 7.